The chain runs to 330 residues: 2-methyl-6-phytyl-1,4-hydroquinone methyltransferase 1, chloroplastic (330 aa).

Residues 1-45 (MKEMVSSSTFRAPGGLGFLGPSKIGLIPLRNRSGVRSRVKYIAPK) constitute a chloroplast transit peptide. Residues 46-295 (CAVSSARPAS…DVEKPVNPFT (250 aa)) are Chloroplast intermembrane-facing. The segment at 107-116 (VVDVGGGTGF) is SAM motif I. The interval 152 to 165 (VNIIEGDAEDLPYP) is SAM motif II. Positions 193 to 206 (RVLKLGGVACLIGP) are SAM motif III. Residues 296–316 (FIFRFVMGTICASYYVLVPIY) form a helical membrane-spanning segment. Over 317–330 (MWMKDQIVPKDQPI) the chain is Stromal.

It belongs to the class I-like SAM-binding methyltransferase superfamily. MPBQ/MBSQ MT family.

The protein resides in the plastid. It localises to the chloroplast inner membrane. It carries out the reaction 2-methyl-6-phytyl-1,4-benzene-1,4-diol + S-adenosyl-L-methionine = 2,3-dimethyl-6-phytylbenzene-1,4-diol + S-adenosyl-L-homocysteine + H(+). The catalysed reaction is 2-methyl-6-(all-trans-nonaprenyl)benzene-1,4-diol + S-adenosyl-L-methionine = plastoquinol-9 + S-adenosyl-L-homocysteine + H(+). The enzyme catalyses 6-geranylgeranyl-2-methylbenzene-1,4-diol + S-adenosyl-L-methionine = 6-geranylgeranyl-2,3-dimethylbenzene-1,4-diol + S-adenosyl-L-homocysteine + H(+). It participates in cofactor biosynthesis; tocopherol biosynthesis. In terms of biological role, involved in a key methylation step in both tocopherols (vitamin E) and plastoquinone synthesis. Catalyzes the conversion of 2-methyl-6-phytyl-1,4-hydroquinone (MPBQ) to 2,3-dimethyl-6-phytyl-1,4-hydroquinone (DMPQ, a substrate for tocopherol cyclase), and 2-methyl-6-solanyl-1,4-benzoquinone (MSBQ) to plastoquinone. The chain is 2-methyl-6-phytyl-1,4-hydroquinone methyltransferase 1, chloroplastic (ARSM2) from Oryza sativa subsp. japonica (Rice).